The sequence spans 563 residues: Alpha-keto-acid decarboxylase (563 aa).

A thiamine diphosphate-binding site is contributed by glutamate 59. Positions 347–367 are disordered; sequence SSPPVASPPAEPLPPPPPREQ. The span at 351–366 shows a compositional bias: pro residues; the sequence is VASPPAEPLPPPPPRE. The thiamine pyrophosphate binding stretch occupies residues 394–476; sequence TSFYGMADHR…VVVNNDGYTV (83 aa). Mg(2+) is bound by residues aspartate 444, asparagine 471, and glycine 473.

This sequence belongs to the TPP enzyme family. The cofactor is a metal cation. Thiamine diphosphate is required as a cofactor.

Decarboxylates branched-chain and aromatic alpha-keto acids to aldehydes. The polypeptide is Alpha-keto-acid decarboxylase (kdc) (Mycolicibacterium paratuberculosis (strain ATCC BAA-968 / K-10) (Mycobacterium paratuberculosis)).